A 147-amino-acid chain; its full sequence is Protein-export protein SecB 2 (147 aa).

It belongs to the SecB family. Homotetramer, a dimer of dimers. One homotetramer interacts with 1 SecA dimer.

It is found in the cytoplasm. Functionally, one of the proteins required for the normal export of preproteins out of the cell cytoplasm. It is a molecular chaperone that binds to a subset of precursor proteins, maintaining them in a translocation-competent state. It also specifically binds to its receptor SecA. In Francisella tularensis subsp. holarctica (strain FTNF002-00 / FTA), this protein is Protein-export protein SecB 2.